We begin with the raw amino-acid sequence, 1267 residues long: DNA-directed RNA polymerase subunit beta'' (1267 aa).

Residues cysteine 222, cysteine 290, cysteine 297, and cysteine 300 each contribute to the Zn(2+) site.

The protein belongs to the RNA polymerase beta' chain family. RpoC2 subfamily. In plastids the minimal PEP RNA polymerase catalytic core is composed of four subunits: alpha, beta, beta', and beta''. When a (nuclear-encoded) sigma factor is associated with the core the holoenzyme is formed, which can initiate transcription. It depends on Zn(2+) as a cofactor.

It localises to the plastid. It is found in the chloroplast. It catalyses the reaction RNA(n) + a ribonucleoside 5'-triphosphate = RNA(n+1) + diphosphate. In terms of biological role, DNA-dependent RNA polymerase catalyzes the transcription of DNA into RNA using the four ribonucleoside triphosphates as substrates. This chain is DNA-directed RNA polymerase subunit beta'', found in Emiliania huxleyi (Coccolithophore).